We begin with the raw amino-acid sequence, 297 residues long: Phosphoribosylaminoimidazole-succinocarboxamide synthase (297 aa).

The protein belongs to the SAICAR synthetase family.

It carries out the reaction 5-amino-1-(5-phospho-D-ribosyl)imidazole-4-carboxylate + L-aspartate + ATP = (2S)-2-[5-amino-1-(5-phospho-beta-D-ribosyl)imidazole-4-carboxamido]succinate + ADP + phosphate + 2 H(+). Its pathway is purine metabolism; IMP biosynthesis via de novo pathway; 5-amino-1-(5-phospho-D-ribosyl)imidazole-4-carboxamide from 5-amino-1-(5-phospho-D-ribosyl)imidazole-4-carboxylate: step 1/2. This Corynebacterium glutamicum (strain R) protein is Phosphoribosylaminoimidazole-succinocarboxamide synthase.